The sequence spans 534 residues: CTP synthase (534 aa).

The interval 1 to 267 is amidoligase domain; that stretch reads MTKYIFVTGG…DQIVCDHLKL (267 aa). Residue serine 13 coordinates CTP. Residue serine 13 participates in UTP binding. Residue 14–19 coordinates ATP; the sequence is SIGKGI. Tyrosine 54 is an L-glutamine binding site. Aspartate 71 contacts ATP. Aspartate 71 and glutamate 141 together coordinate Mg(2+). Residues 148 to 150, 188 to 193, and lysine 224 contribute to the CTP site; these read DIE and KTKPTQ. Residues 188–193 and lysine 224 contribute to the UTP site; that span reads KTKPTQ. ATP is bound at residue 240–242; sequence RDV. Positions 292–534 constitute a Glutamine amidotransferase type-1 domain; sequence KIALVGKYVE…FVTAAIKNSN (243 aa). Position 354 (glycine 354) interacts with L-glutamine. Catalysis depends on cysteine 381, which acts as the Nucleophile; for glutamine hydrolysis. Residues 382–385, glutamate 405, and arginine 463 contribute to the L-glutamine site; that span reads LGMQ. Active-site residues include histidine 508 and glutamate 510.

It belongs to the CTP synthase family. Homotetramer.

The catalysed reaction is UTP + L-glutamine + ATP + H2O = CTP + L-glutamate + ADP + phosphate + 2 H(+). It catalyses the reaction L-glutamine + H2O = L-glutamate + NH4(+). It carries out the reaction UTP + NH4(+) + ATP = CTP + ADP + phosphate + 2 H(+). The protein operates within pyrimidine metabolism; CTP biosynthesis via de novo pathway; CTP from UDP: step 2/2. Its activity is regulated as follows. Allosterically activated by GTP, when glutamine is the substrate; GTP has no effect on the reaction when ammonia is the substrate. The allosteric effector GTP functions by stabilizing the protein conformation that binds the tetrahedral intermediate(s) formed during glutamine hydrolysis. Inhibited by the product CTP, via allosteric rather than competitive inhibition. In terms of biological role, catalyzes the ATP-dependent amination of UTP to CTP with either L-glutamine or ammonia as the source of nitrogen. Regulates intracellular CTP levels through interactions with the four ribonucleotide triphosphates. This chain is CTP synthase, found in Streptococcus pyogenes serotype M1.